We begin with the raw amino-acid sequence, 66 residues long: uncharacterized protein (66 aa).

This is an uncharacterized protein from Bacillus subtilis (strain 168).